The primary structure comprises 332 residues: Ribosomal RNA small subunit methyltransferase H (332 aa).

S-adenosyl-L-methionine contacts are provided by residues 36 to 38 (GGY), D54, F81, D102, and Q109. The tract at residues 284–332 (VTAGQEEVSANPRARSAKLRAAERTAAPATADDGESPGWPSLANVMRGG) is disordered.

It belongs to the methyltransferase superfamily. RsmH family.

It is found in the cytoplasm. It catalyses the reaction cytidine(1402) in 16S rRNA + S-adenosyl-L-methionine = N(4)-methylcytidine(1402) in 16S rRNA + S-adenosyl-L-homocysteine + H(+). Functionally, specifically methylates the N4 position of cytidine in position 1402 (C1402) of 16S rRNA. This is Ribosomal RNA small subunit methyltransferase H from Nitrobacter hamburgensis (strain DSM 10229 / NCIMB 13809 / X14).